The chain runs to 100 residues: Aspartyl/glutamyl-tRNA(Asn/Gln) amidotransferase subunit C (100 aa).

It belongs to the GatC family. Heterotrimer of A, B and C subunits.

It catalyses the reaction L-glutamyl-tRNA(Gln) + L-glutamine + ATP + H2O = L-glutaminyl-tRNA(Gln) + L-glutamate + ADP + phosphate + H(+). It carries out the reaction L-aspartyl-tRNA(Asn) + L-glutamine + ATP + H2O = L-asparaginyl-tRNA(Asn) + L-glutamate + ADP + phosphate + 2 H(+). Functionally, allows the formation of correctly charged Asn-tRNA(Asn) or Gln-tRNA(Gln) through the transamidation of misacylated Asp-tRNA(Asn) or Glu-tRNA(Gln) in organisms which lack either or both of asparaginyl-tRNA or glutaminyl-tRNA synthetases. The reaction takes place in the presence of glutamine and ATP through an activated phospho-Asp-tRNA(Asn) or phospho-Glu-tRNA(Gln). In Staphylococcus saprophyticus subsp. saprophyticus (strain ATCC 15305 / DSM 20229 / NCIMB 8711 / NCTC 7292 / S-41), this protein is Aspartyl/glutamyl-tRNA(Asn/Gln) amidotransferase subunit C.